The chain runs to 86 residues: HssA/B-like protein 60 (86 aa).

Residues 11-33 (GNIKSSSKSNIASSSSSSSSQSL) are disordered.

Belongs to the hssA/B family.

This is HssA/B-like protein 60 (hssl60) from Dictyostelium discoideum (Social amoeba).